The chain runs to 165 residues: NADH-quinone oxidoreductase subunit I (165 aa).

4Fe-4S ferredoxin-type domains follow at residues 57-86 and 96-125; these read RRYDNGEERCIACKLCEAVCPALAITIESE and SRYDIDLTKCIFCGFCEEACPVDAIVETHI. [4Fe-4S] cluster contacts are provided by cysteine 66, cysteine 69, cysteine 72, cysteine 76, cysteine 105, cysteine 108, cysteine 111, and cysteine 115.

Belongs to the complex I 23 kDa subunit family. In terms of assembly, NDH-1 is composed of 14 different subunits. Subunits NuoA, H, J, K, L, M, N constitute the membrane sector of the complex. [4Fe-4S] cluster is required as a cofactor.

It is found in the cell inner membrane. It carries out the reaction a quinone + NADH + 5 H(+)(in) = a quinol + NAD(+) + 4 H(+)(out). Functionally, NDH-1 shuttles electrons from NADH, via FMN and iron-sulfur (Fe-S) centers, to quinones in the respiratory chain. The immediate electron acceptor for the enzyme in this species is believed to be ubiquinone. Couples the redox reaction to proton translocation (for every two electrons transferred, four hydrogen ions are translocated across the cytoplasmic membrane), and thus conserves the redox energy in a proton gradient. This is NADH-quinone oxidoreductase subunit I from Polaromonas sp. (strain JS666 / ATCC BAA-500).